Reading from the N-terminus, the 282-residue chain is Putative glycosyltransferase HI_0765 (282 aa).

It belongs to the glycosyltransferase 25 family.

The sequence is that of Putative glycosyltransferase HI_0765 from Haemophilus influenzae (strain ATCC 51907 / DSM 11121 / KW20 / Rd).